Consider the following 539-residue polypeptide: T-complex protein 1 subunit delta (539 aa).

The tract at residues 1–29 is disordered; that stretch reads MPENVAPRSGATAGAAGGRGKGAYQDRDK. Arg19 carries the omega-N-methylarginine modification. N6-acetyllysine is present on Lys21. Ser36 carries the phosphoserine modification. Gly53 contacts ADP. Gly53 lines the ATP pocket. Asp104 is a binding site for Mg(2+). ADP is bound by residues Gly105, Thr106, Thr107, Ser108, Asn172, Ser173, and Lys174. ATP contacts are provided by Gly105 and Thr106. Lys174 provides a ligand contact to ATP. Ser184 and Ser202 each carry phosphoserine. Residues Lys288, Lys302, Lys319, and Lys326 each carry the N6-acetyllysine modification. Gly425 lines the ADP pocket. Ser444 is subject to Phosphoserine. Gln510 provides a ligand contact to ADP.

Belongs to the TCP-1 chaperonin family. As to quaternary structure, component of the chaperonin-containing T-complex (TRiC), a hexadecamer composed of two identical back-to-back stacked rings enclosing a protein folding chamber. Each ring is made up of eight different subunits: TCP1/CCT1, CCT2, CCT3, CCT4, CCT5, CCT6A/CCT6, CCT7, CCT8. Interacts with PACRG. Interacts with DNAAF4. Interacts with DLEC1.

Its subcellular location is the cytoplasm. The protein resides in the melanosome. It localises to the cytoskeleton. The protein localises to the microtubule organizing center. It is found in the centrosome. Its subcellular location is the cilium basal body. The enzyme catalyses ATP + H2O = ADP + phosphate + H(+). Functionally, component of the chaperonin-containing T-complex (TRiC), a molecular chaperone complex that assists the folding of actin, tubulin and other proteins upon ATP hydrolysis. The TRiC complex mediates the folding of WRAP53/TCAB1, thereby regulating telomere maintenance. As part of the TRiC complex may play a role in the assembly of BBSome, a complex involved in ciliogenesis regulating transports vesicles to the cilia. The sequence is that of T-complex protein 1 subunit delta (CCT4) from Homo sapiens (Human).